The primary structure comprises 291 residues: Orotidine 5'-phosphate decarboxylase (291 aa).

Residue lysine 97 is the Proton donor of the active site.

The protein belongs to the OMP decarboxylase family. Type 2 subfamily.

It carries out the reaction orotidine 5'-phosphate + H(+) = UMP + CO2. It participates in pyrimidine metabolism; UMP biosynthesis via de novo pathway; UMP from orotate: step 2/2. The chain is Orotidine 5'-phosphate decarboxylase from Clostridium kluyveri (strain ATCC 8527 / DSM 555 / NBRC 12016 / NCIMB 10680 / K1).